The chain runs to 485 residues: Probable cobyric acid synthase (485 aa).

The GATase cobBQ-type domain maps to 250 to 435 (EVEIAVIRLP…LHGLFDNENI (186 aa)). The Nucleophile role is filled by C328. H427 is an active-site residue.

Belongs to the CobB/CobQ family. CobQ subfamily.

The protein operates within cofactor biosynthesis; adenosylcobalamin biosynthesis. Catalyzes amidations at positions B, D, E, and G on adenosylcobyrinic A,C-diamide. NH(2) groups are provided by glutamine, and one molecule of ATP is hydrogenolyzed for each amidation. The chain is Probable cobyric acid synthase from Methanosarcina acetivorans (strain ATCC 35395 / DSM 2834 / JCM 12185 / C2A).